Reading from the N-terminus, the 305-residue chain is Ribosomal RNA small subunit methyltransferase H (305 aa).

Residues 47-49 (GGH), aspartate 66, phenylalanine 93, aspartate 108, and glutamine 115 each bind S-adenosyl-L-methionine. Residues 280–305 (ASAEEQERNPRSRSAKLRIARKRSES) form a disordered region. The span at 290 to 305 (RSRSAKLRIARKRSES) shows a compositional bias: basic residues.

It belongs to the methyltransferase superfamily. RsmH family.

It is found in the cytoplasm. It carries out the reaction cytidine(1402) in 16S rRNA + S-adenosyl-L-methionine = N(4)-methylcytidine(1402) in 16S rRNA + S-adenosyl-L-homocysteine + H(+). In terms of biological role, specifically methylates the N4 position of cytidine in position 1402 (C1402) of 16S rRNA. The sequence is that of Ribosomal RNA small subunit methyltransferase H from Synechococcus sp. (strain WH7803).